The chain runs to 157 residues: Peptide methionine sulfoxide reductase MsrA (157 aa).

Cys-10 is an active-site residue.

This sequence belongs to the MsrA Met sulfoxide reductase family.

The enzyme catalyses L-methionyl-[protein] + [thioredoxin]-disulfide + H2O = L-methionyl-(S)-S-oxide-[protein] + [thioredoxin]-dithiol. The catalysed reaction is [thioredoxin]-disulfide + L-methionine + H2O = L-methionine (S)-S-oxide + [thioredoxin]-dithiol. Has an important function as a repair enzyme for proteins that have been inactivated by oxidation. Catalyzes the reversible oxidation-reduction of methionine sulfoxide in proteins to methionine. In Clostridium perfringens (strain 13 / Type A), this protein is Peptide methionine sulfoxide reductase MsrA.